Consider the following 238-residue polypeptide: Uridylate kinase (238 aa).

Residue 11–14 (KLSG) coordinates ATP. Gly52 is a UMP binding site. Residues Gly53 and Arg57 each coordinate ATP. Residues Asp72 and 134–141 (TGFSYFTT) each bind UMP. 3 residues coordinate ATP: Asn162, Tyr168, and Asp171.

This sequence belongs to the UMP kinase family. In terms of assembly, homohexamer.

The protein resides in the cytoplasm. It catalyses the reaction UMP + ATP = UDP + ADP. It participates in pyrimidine metabolism; CTP biosynthesis via de novo pathway; UDP from UMP (UMPK route): step 1/1. With respect to regulation, inhibited by UTP. Functionally, catalyzes the reversible phosphorylation of UMP to UDP. This Mesoplasma florum (strain ATCC 33453 / NBRC 100688 / NCTC 11704 / L1) (Acholeplasma florum) protein is Uridylate kinase.